A 198-amino-acid chain; its full sequence is Recombination protein RecR (198 aa).

The C4-type zinc finger occupies 56-71 (CTECRDFSETKICAIC). One can recognise a Toprim domain in the interval 79 to 174 (HQLCVVESPP…RPSRLAQGLP (96 aa)).

This sequence belongs to the RecR family.

May play a role in DNA repair. It seems to be involved in an RecBC-independent recombinational process of DNA repair. It may act with RecF and RecO. In Xylella fastidiosa (strain Temecula1 / ATCC 700964), this protein is Recombination protein RecR.